A 581-amino-acid chain; its full sequence is Laccase-1 (581 aa).

An N-terminal signal peptide occupies residues 1 to 25 (MENLGFLIISTFLLLFTTLLPYSSA). Plastocyanin-like domains lie at 34 to 150 (NVEW…PRQP) and 161 to 312 (EIPI…YTGK). Asparagine 80 is a glycosylation site (N-linked (GlcNAc...) asparagine). 4 residues coordinate Cu cation: histidine 84, histidine 86, histidine 129, and histidine 131. N-linked (GlcNAc...) asparagine glycosylation is found at asparagine 241, asparagine 300, asparagine 386, and asparagine 403. Residues 429 to 565 (DFPEKPPNRF…AMGFIVKDGP (137 aa)) enclose the Plastocyanin-like 3 domain. Cu cation-binding residues include histidine 482, histidine 485, histidine 487, histidine 544, cysteine 545, histidine 546, and histidine 550.

The protein belongs to the multicopper oxidase family. Requires Cu cation as cofactor. As to expression, expressed in roots, stems and flowers.

The protein resides in the secreted. It is found in the extracellular space. The protein localises to the apoplast. The catalysed reaction is 4 hydroquinone + O2 = 4 benzosemiquinone + 2 H2O. Functionally, lignin degradation and detoxification of lignin-derived products. The polypeptide is Laccase-1 (LAC1) (Arabidopsis thaliana (Mouse-ear cress)).